We begin with the raw amino-acid sequence, 265 residues long: ATP synthase subunit a (265 aa).

Transmembrane regions (helical) follow at residues valine 26–tyrosine 46, isoleucine 88–isoleucine 108, aspartate 132–isoleucine 152, proline 168–alanine 188, phenylalanine 195–alanine 217, and leucine 231–leucine 251.

This sequence belongs to the ATPase A chain family. As to quaternary structure, F-type ATPases have 2 components, CF(1) - the catalytic core - and CF(0) - the membrane proton channel. CF(1) has five subunits: alpha(3), beta(3), gamma(1), delta(1), epsilon(1). CF(0) has three main subunits: a(1), b(2) and c(9-12). The alpha and beta chains form an alternating ring which encloses part of the gamma chain. CF(1) is attached to CF(0) by a central stalk formed by the gamma and epsilon chains, while a peripheral stalk is formed by the delta and b chains.

It localises to the cell inner membrane. Functionally, key component of the proton channel; it plays a direct role in the translocation of protons across the membrane. This is ATP synthase subunit a from Histophilus somni (strain 129Pt) (Haemophilus somnus).